The primary structure comprises 335 residues: Lipoyl synthase (335 aa).

Over residues 1 to 13 the composition is skewed to polar residues; that stretch reads MTIDTNPESSTPS. Residues 1-29 form a disordered region; sequence MTIDTNPESSTPSAPAYNPSEKQKGSAKT. [4Fe-4S] cluster is bound by residues Cys-75, Cys-80, Cys-86, Cys-101, Cys-105, Cys-108, and Ser-315. In terms of domain architecture, Radical SAM core spans 86-304; that stretch reads CFGKGTATFM…EEEAYKMGFA (219 aa).

The protein belongs to the radical SAM superfamily. Lipoyl synthase family. It depends on [4Fe-4S] cluster as a cofactor.

Its subcellular location is the cytoplasm. The enzyme catalyses [[Fe-S] cluster scaffold protein carrying a second [4Fe-4S](2+) cluster] + N(6)-octanoyl-L-lysyl-[protein] + 2 oxidized [2Fe-2S]-[ferredoxin] + 2 S-adenosyl-L-methionine + 4 H(+) = [[Fe-S] cluster scaffold protein] + N(6)-[(R)-dihydrolipoyl]-L-lysyl-[protein] + 4 Fe(3+) + 2 hydrogen sulfide + 2 5'-deoxyadenosine + 2 L-methionine + 2 reduced [2Fe-2S]-[ferredoxin]. It participates in protein modification; protein lipoylation via endogenous pathway; protein N(6)-(lipoyl)lysine from octanoyl-[acyl-carrier-protein]: step 2/2. In terms of biological role, catalyzes the radical-mediated insertion of two sulfur atoms into the C-6 and C-8 positions of the octanoyl moiety bound to the lipoyl domains of lipoate-dependent enzymes, thereby converting the octanoylated domains into lipoylated derivatives. This chain is Lipoyl synthase, found in Herminiimonas arsenicoxydans.